The following is a 685-amino-acid chain: Envelope glycoprotein (685 aa).

The signal sequence occupies residues 1-41; it reads MVLLPGSMLLTSNLHHLRHQMSPGSWKRLIILLSCVFGGGG. The Extracellular segment spans residues 42–632; sequence TSLQNKNPHQ…NNSPWFTTLL (591 aa). 2 cysteine pairs are disulfide-bonded: Cys148/Cys169 and Cys161/Cys174. Positions 276–309 are disordered; it reads PPRTSLALPPPLPPREAPPPSLPDSNSTALATSA. The segment covering 283-297 has biased composition (pro residues); it reads LPPPLPPREAPPPSL. A compositionally biased stretch (polar residues) spans 299–309; it reads DSNSTALATSA. N-linked (GlcNAc...) asparagine; by host glycans are attached at residues Asn301 and Asn344. 3 disulfide bridges follow: Cys354–Cys357, Cys354–Cys584, and Cys576–Cys583. A CXXC motif is present at residues 354–357; the sequence is CWLC. Asn415, Asn421, Asn433, and Asn453 each carry an N-linked (GlcNAc...) asparagine; by host glycan. The tract at residues 492–512 is fusion peptide; sequence VSLTLAVLLGLGITAGIGTGS. 2 coiled-coil regions span residues 520 to 570 and 580 to 616; these read IDLQ…LLFL and KEEC…KSQN. The immunosuppression stretch occupies residues 559 to 575; sequence LQNRRGLDLLFLKEGGL. The short motif at 576 to 584 is the CX6CC element; the sequence is CAALKEECC. The helical transmembrane segment at 633–653 threads the bilayer; the sequence is STIAGPLLLLLLLLILGPCII. Residue Cys651 is the site of S-palmitoyl cysteine; by host attachment. At 654-685 the chain is on the cytoplasmic side; it reads NKLVQFINDRISAVKILVLRQKYQALENEGNL. The YXXL motif; contains endocytosis signal motif lies at 676 to 679; sequence YQAL.

As to quaternary structure, the mature envelope protein (Env) consists of a trimer of SU-TM heterodimers attached by a labile interchain disulfide bond. Specific enzymatic cleavages in vivo yield mature proteins. Envelope glycoproteins are synthesized as an inactive precursor that is N-glycosylated and processed likely by host cell furin or by a furin-like protease in the Golgi to yield the mature SU and TM proteins. The cleavage site between SU and TM requires the minimal sequence [KR]-X-[KR]-R. The R-peptide is released from the C-terminus of the cytoplasmic tail of the TM protein upon particle formation as a result of proteolytic cleavage by the viral protease. Cleavage of this peptide is required for TM to become fusogenic. Post-translationally, the CXXC motif is highly conserved across a broad range of retroviral envelope proteins. It is thought to participate in the formation of a labile disulfide bond possibly with the CX6CC motif present in the transmembrane protein. Isomerization of the intersubunit disulfide bond to an SU intrachain disulfide bond is thought to occur upon receptor recognition in order to allow membrane fusion. In terms of processing, the transmembrane protein is palmitoylated. The R-peptide is palmitoylated.

The protein localises to the virion membrane. Its subcellular location is the host cell membrane. Its function is as follows. The surface protein (SU) attaches the virus to the host cell by binding to its receptor. This interaction triggers the refolding of the transmembrane protein (TM) and is thought to activate its fusogenic potential by unmasking its fusion peptide. Fusion occurs at the host cell plasma membrane. In terms of biological role, the transmembrane protein (TM) acts as a class I viral fusion protein. Under the current model, the protein has at least 3 conformational states: pre-fusion native state, pre-hairpin intermediate state, and post-fusion hairpin state. During viral and target cell membrane fusion, the coiled coil regions (heptad repeats) assume a trimer-of-hairpins structure, positioning the fusion peptide in close proximity to the C-terminal region of the ectodomain. The formation of this structure appears to drive apposition and subsequent fusion of viral and target cell membranes. Membranes fusion leads to delivery of the nucleocapsid into the cytoplasm. This Gibbon ape leukemia virus (GALV) protein is Envelope glycoprotein (env).